The following is a 217-amino-acid chain: Ribosomal RNA small subunit methyltransferase G (217 aa).

S-adenosyl-L-methionine-binding positions include glycine 79, leucine 84, 130–131, and arginine 148; that span reads IE.

This sequence belongs to the methyltransferase superfamily. RNA methyltransferase RsmG family.

The protein resides in the cytoplasm. It catalyses the reaction guanosine(527) in 16S rRNA + S-adenosyl-L-methionine = N(7)-methylguanosine(527) in 16S rRNA + S-adenosyl-L-homocysteine. Functionally, specifically methylates the N7 position of guanine in position 527 of 16S rRNA. This Desulfotalea psychrophila (strain LSv54 / DSM 12343) protein is Ribosomal RNA small subunit methyltransferase G.